A 104-amino-acid chain; its full sequence is PTS system lactose-specific EIIA component (104 aa).

A PTS EIIA type-3 domain is found at 1 to 102; the sequence is MNRDEVQLLG…MKHLIELYKK (102 aa). The active-site Tele-phosphohistidine intermediate is the His78. His78 is modified (phosphohistidine; by HPr). Asp81 serves as a coordination point for Mg(2+).

As to quaternary structure, homotrimer. Requires Mg(2+) as cofactor.

It is found in the cytoplasm. Its function is as follows. The phosphoenolpyruvate-dependent sugar phosphotransferase system (sugar PTS), a major carbohydrate active transport system, catalyzes the phosphorylation of incoming sugar substrates concomitantly with their translocation across the cell membrane. The enzyme II LacEF PTS system is involved in lactose transport. This chain is PTS system lactose-specific EIIA component, found in Staphylococcus epidermidis (strain ATCC 35984 / DSM 28319 / BCRC 17069 / CCUG 31568 / BM 3577 / RP62A).